The primary structure comprises 157 residues: Endoribonuclease YbeY (157 aa).

Zn(2+) is bound by residues histidine 114, histidine 118, and histidine 124.

This sequence belongs to the endoribonuclease YbeY family. Zn(2+) is required as a cofactor.

The protein localises to the cytoplasm. Its function is as follows. Single strand-specific metallo-endoribonuclease involved in late-stage 70S ribosome quality control and in maturation of the 3' terminus of the 16S rRNA. The chain is Endoribonuclease YbeY from Yersinia pseudotuberculosis serotype O:1b (strain IP 31758).